The chain runs to 101 residues: NADH-quinone oxidoreductase subunit K (101 aa).

Helical transmembrane passes span 4-24 (LGHY…GIFL), 30-50 (IVLL…FVAF), and 61-81 (VFVF…LAIL).

Belongs to the complex I subunit 4L family. In terms of assembly, NDH-1 is composed of 14 different subunits. Subunits NuoA, H, J, K, L, M, N constitute the membrane sector of the complex.

Its subcellular location is the cell inner membrane. It catalyses the reaction a quinone + NADH + 5 H(+)(in) = a quinol + NAD(+) + 4 H(+)(out). Functionally, NDH-1 shuttles electrons from NADH, via FMN and iron-sulfur (Fe-S) centers, to quinones in the respiratory chain. The immediate electron acceptor for the enzyme in this species is believed to be ubiquinone. Couples the redox reaction to proton translocation (for every two electrons transferred, four hydrogen ions are translocated across the cytoplasmic membrane), and thus conserves the redox energy in a proton gradient. The chain is NADH-quinone oxidoreductase subunit K from Leptothrix cholodnii (strain ATCC 51168 / LMG 8142 / SP-6) (Leptothrix discophora (strain SP-6)).